A 116-amino-acid polypeptide reads, in one-letter code: Transcriptional regulator WhiB4 (116 aa).

The 4Fe-4S Wbl-type domain occupies 36–92; it reads LCRATDPDELFVRGAAQRKAAVICRHCPVMQECGADALDNKVEFGVWGGMTERQRRA. Residues Cys37, Cys59, Cys62, and Cys68 each contribute to the [4Fe-4S] cluster site.

Belongs to the WhiB family. Requires [4Fe-4S] cluster as cofactor. The Fe-S cluster can be nitrosylated by nitric oxide (NO). Post-translationally, upon Fe-S cluster removal intramolecular disulfide bonds are formed.

The protein resides in the cytoplasm. Its function is as follows. Acts as a transcriptional regulator. Probably redox-responsive. The apo- but not holo-form probably binds DNA. Plays a role in lipooligosaccharide (LOS) biosynthesis by regulating LOS gene expression. The protein is Transcriptional regulator WhiB4 (whiB4) of Mycobacterium marinum (strain ATCC BAA-535 / M).